A 356-amino-acid polypeptide reads, in one-letter code: Dihydroorotate dehydrogenase (quinone) (356 aa).

FMN-binding positions include 67–71 (PGFDK) and threonine 91. A substrate-binding site is contributed by lysine 71. 116 to 120 (NRMGF) contacts substrate. FMN contacts are provided by asparagine 147 and asparagine 178. Asparagine 178 lines the substrate pocket. Serine 181 acts as the Nucleophile in catalysis. Asparagine 183 contacts substrate. FMN contacts are provided by lysine 218 and serine 246. 247 to 248 (NT) is a substrate binding site. Residues glycine 268, glycine 297, and 318–319 (YS) contribute to the FMN site.

The protein belongs to the dihydroorotate dehydrogenase family. Type 2 subfamily. Monomer. FMN serves as cofactor.

The protein localises to the cell membrane. It catalyses the reaction (S)-dihydroorotate + a quinone = orotate + a quinol. It functions in the pathway pyrimidine metabolism; UMP biosynthesis via de novo pathway; orotate from (S)-dihydroorotate (quinone route): step 1/1. In terms of biological role, catalyzes the conversion of dihydroorotate to orotate with quinone as electron acceptor. The sequence is that of Dihydroorotate dehydrogenase (quinone) from Sphingopyxis alaskensis (strain DSM 13593 / LMG 18877 / RB2256) (Sphingomonas alaskensis).